Reading from the N-terminus, the 548-residue chain is Chaperonin GroEL (548 aa).

Residues 30–33 (TLGP), lysine 51, 87–91 (DGTTT), glycine 415, 479–481 (NAA), and aspartate 495 each bind ATP. Positions 524–548 (LPKEDKSSDSSSSPAGGMGGMGGMM) are disordered. The span at 539–548 (GGMGGMGGMM) shows a compositional bias: gly residues.

The protein belongs to the chaperonin (HSP60) family. As to quaternary structure, forms a cylinder of 14 subunits composed of two heptameric rings stacked back-to-back. Interacts with the co-chaperonin GroES.

The protein localises to the cytoplasm. The catalysed reaction is ATP + H2O + a folded polypeptide = ADP + phosphate + an unfolded polypeptide.. Its function is as follows. Together with its co-chaperonin GroES, plays an essential role in assisting protein folding. The GroEL-GroES system forms a nano-cage that allows encapsulation of the non-native substrate proteins and provides a physical environment optimized to promote and accelerate protein folding. This Buchnera aphidicola subsp. Acyrthosiphon pisum (strain Tuc7) protein is Chaperonin GroEL.